Reading from the N-terminus, the 410-residue chain is MKEEMIQRFTSYVKVDTQSDADKESCPSTEGQLNLARQLVEEMKSIGIQEVTMDENGYVMGTIPSNTDKDVPTIGFLAHIDTATDFTGKNVKPQLHENYQGGDITLNEDLHIVLSPTQFPNLQKYQGHTLITTDGTTLLGADNKAGIAEIMTAMHYLIEHPEIKHGKIRVAFTPDEEIGRGPHKFDVEAFGASYAYTIDGGPLGELQYESFNAAGAKVSIKGNNVHPGTAKDKMVSAAKIGMLFHNKLPSDESPEYTEGYEGFFHLTKFVGEVEEAELQYIIRDFDKDKFNDRKALFEKIASDLKAIYGENSINLKIQDQYYNMREKIEPVKHIVDIAHEAMENRSVTPVIEPIRGGTDGSQLSYKGLPTPNIFTGGENFHGKYEFISVENMVKATEVIVEIARLFEEKA.

Position 79 (His-79) interacts with Zn(2+). Residue Asp-81 is part of the active site. Position 142 (Asp-142) interacts with Zn(2+). Glu-176 (proton acceptor) is an active-site residue. Zn(2+) is bound by residues Glu-177, Asp-199, and His-381.

Belongs to the peptidase M20B family. Zn(2+) is required as a cofactor.

The protein localises to the cytoplasm. It carries out the reaction Release of the N-terminal residue from a tripeptide.. Functionally, cleaves the N-terminal amino acid of tripeptides. This chain is Peptidase T, found in Bacillus pumilus (strain SAFR-032).